The primary structure comprises 320 residues: Cytochrome f (320 aa).

The signal sequence occupies residues 1 to 35; sequence MQTRKTLSWIKEEITRSISVSLMIYIITGAYISNA. Heme contacts are provided by Tyr-36, Cys-56, Cys-59, and His-60. The helical transmembrane segment at 286 to 306 threads the bilayer; the sequence is VQGLLFFLASVILAQIFLVLK.

This sequence belongs to the cytochrome f family. The 4 large subunits of the cytochrome b6-f complex are cytochrome b6, subunit IV (17 kDa polypeptide, petD), cytochrome f and the Rieske protein, while the 4 small subunits are PetG, PetL, PetM and PetN. The complex functions as a dimer. It depends on heme as a cofactor.

Its subcellular location is the plastid. It localises to the chloroplast thylakoid membrane. Functionally, component of the cytochrome b6-f complex, which mediates electron transfer between photosystem II (PSII) and photosystem I (PSI), cyclic electron flow around PSI, and state transitions. The sequence is that of Cytochrome f from Populus trichocarpa (Western balsam poplar).